Reading from the N-terminus, the 1179-residue chain is MEEKIKSNLIHSKTNEDIELIKQKLKEDRELLEKERAQFEEERKIIFESLNKVVGSGSANITKNIAKALKKAEKKNGVGSNLNLANSSSGSNISVYNNNNNNNNNNNSNNIGTPFNVQHKVHVDFDYKWSGCQDLEQVFLIDCILGTGSYGTVYKAIHKDTNFVLAIKSIPIKESEEIEKEISILKKCKSQNIVSYFGSGQQGDNLWILMEYCSANSIRDMLELTEKSLTEKQISVILQQALKGLHYLHQSNIIHRDIKAANILINEDAIVKLADFGVSSQLEDSLRGEASQLVGTPLWMAPEIIKRQNYNNKCDIWSLGITAIEMAESFPPLYTMPPTRAMLMIPNKPPPTLSKPHHFSKELNDFIGQCCQKDPEKRPSAIELLTHPFLVQNISTPQEVLKPLIDECLKKSIKKKKQSPNNDQPPPPQTPNKLSPPDTPLPNVPVLGKNQGLLNKSNGMKKSHGSSLDEAESMNTFILKSTIGSSSNGSNDTGGDDFDCGTMILKDDTCINGSGNADKISTIPAFIAALNKSNGKVITQNQQQQQQQPIASSLQQSNPIASIVNENQYPNTIEKRGLSSINSNNSLLIGNSGNNKSQNFNNFNNNNNNNNNNNNNNNNNNNNNNNNNNNNEFLINQIKKELILDFNENMKQYINQQLTNLKEEMLKEISKIVIANIPQAPIKTSQSVFNQQLSAAAIIHPISSSSSSSSSFLNSSPSSSNSSATIFKKFPNPPPTPVLINKLPPSQQSTPVTTTTTTSSPSPSPSPSPSPSPSSPLPSSSTSTVNTPNKPPINYRKSKELDSTINIFNGLNNNNTNNNNNNNNSNNNNNNNNVIQSPKLNNRPLSPTTPTKQFNNRPPSPSKFNNRPPSPSKFNNRPPSPSNRPLSPKNSYNSLEKSNNGSISNNRPLSPKNSLEKSTTQNNTSSEDISTTTVTVTSEQGGTPITTPMAFLPRPKPSPPPIPMNKSSPKRAPSPSSNRRLSSSFTAQSSTASTIAALGKQSSMSPNSPLIKERVPPPLPPPRTTITSSTNSPIKPLSPLNKSPNSPYVPPRITTSNISNNSNINNNNNNNSNSSSNGSGGTPITLKRASTTISPIMISSNSPKVMGSNVNKPLALSRNSTEINLPSSSPSTPQKPNTPSSIPTTPTTPTTNGGSVSSKSSTIGRKTVLQVKSIFSPKK.

A coiled-coil region spans residues 12–53; the sequence is SKTNEDIELIKQKLKEDRELLEKERAQFEEERKIIFESLNKV. Positions 111 to 124 constitute a CRIB domain; it reads IGTPFNVQHKVHVD. Residues 139–390 form the Protein kinase domain; that stretch reads FLIDCILGTG…AIELLTHPFL (252 aa). ATP contacts are provided by residues 145–153 and Lys-168; that span reads LGTGSYGTV. Residue Asp-257 is the Proton acceptor of the active site. 4 disordered regions span residues 414 to 469, 589 to 631, 705 to 1086, and 1121 to 1179; these read KKKK…SSLD, IGNS…NNNN, SSSS…PITL, and TEIN…SPKK. The stretch at 621–668 forms a coiled coil; the sequence is NNNNNNNNNNNEFLINQIKKELILDFNENMKQYINQQLTNLKEEMLKE. Composition is skewed to low complexity over residues 705–723 and 743–761; these read SSSSSSSFLNSSPSSSNSS and LPPSQQSTPVTTTTTTSSP. Residues 762–776 show a composition bias toward pro residues; sequence SPSPSPSPSPSPSSP. Low complexity-rich tracts occupy residues 777-788 and 812-833; these read LPSSSTSTVNTP and NNNNTNNNNNNNNSNNNNNNNN. Positions 834-857 are enriched in polar residues; it reads VIQSPKLNNRPLSPTTPTKQFNNR. Residues 864-891 show a composition bias toward low complexity; it reads FNNRPPSPSKFNNRPPSPSNRPLSPKNS. Residues 892-946 are compositionally biased toward polar residues; that stretch reads YNSLEKSNNGSISNNRPLSPKNSLEKSTTQNNTSSEDISTTTVTVTSEQGGTPIT. Residues 954-963 show a composition bias toward pro residues; the sequence is RPKPSPPPIP. 3 stretches are compositionally biased toward low complexity: residues 964-997, 1024-1046, and 1053-1077; these read MNKSSPKRAPSPSSNRRLSSSFTAQSSTASTIAA, TTITSSTNSPIKPLSPLNKSPNS, and ITTSNISNNSNINNNNNNNSNSSSN. A compositionally biased stretch (polar residues) spans 1121–1135; that stretch reads TEINLPSSSPSTPQK. The segment covering 1137–1158 has biased composition (low complexity); that stretch reads NTPSSIPTTPTTPTTNGGSVSS.

It belongs to the protein kinase superfamily. STE Ser/Thr protein kinase family. STE20 subfamily. The cofactor is Mg(2+).

The enzyme catalyses L-seryl-[protein] + ATP = O-phospho-L-seryl-[protein] + ADP + H(+). It catalyses the reaction L-threonyl-[protein] + ATP = O-phospho-L-threonyl-[protein] + ADP + H(+). This is Serine/threonine-protein kinase pakG from Dictyostelium discoideum (Social amoeba).